The primary structure comprises 399 residues: Acetate kinase (399 aa).

Mg(2+) is bound at residue Asn-8. Lys-15 contributes to the ATP binding site. Residue Arg-89 coordinates substrate. Catalysis depends on Asp-147, which acts as the Proton donor/acceptor. ATP is bound by residues 207–211 (HMGNG), 284–286 (DMR), and 332–336 (GIGEN). Glu-385 is a Mg(2+) binding site.

This sequence belongs to the acetokinase family. As to quaternary structure, homodimer. It depends on Mg(2+) as a cofactor. Mn(2+) is required as a cofactor.

It localises to the cytoplasm. The enzyme catalyses acetate + ATP = acetyl phosphate + ADP. It participates in metabolic intermediate biosynthesis; acetyl-CoA biosynthesis; acetyl-CoA from acetate: step 1/2. Catalyzes the formation of acetyl phosphate from acetate and ATP. Can also catalyze the reverse reaction. This chain is Acetate kinase, found in Streptococcus mutans serotype c (strain ATCC 700610 / UA159).